A 56-amino-acid polypeptide reads, in one-letter code: Large ribosomal subunit protein bL32 (56 aa).

It belongs to the bacterial ribosomal protein bL32 family.

This chain is Large ribosomal subunit protein bL32, found in Bacillus cereus (strain ATCC 14579 / DSM 31 / CCUG 7414 / JCM 2152 / NBRC 15305 / NCIMB 9373 / NCTC 2599 / NRRL B-3711).